We begin with the raw amino-acid sequence, 209 residues long: Small ribosomal subunit protein uS4 (209 aa).

The disordered stretch occupies residues 23 to 46 (SRNPLLKKPHPPGQHGMQRKKKSD). One can recognise an S4 RNA-binding domain in the interval 93 to 156 (CRLDNMVYRM…RKLQSVQESL (64 aa)).

Belongs to the universal ribosomal protein uS4 family. Part of the 30S ribosomal subunit. Contacts protein S5. The interaction surface between S4 and S5 is involved in control of translational fidelity.

One of the primary rRNA binding proteins, it binds directly to 16S rRNA where it nucleates assembly of the body of the 30S subunit. Functionally, with S5 and S12 plays an important role in translational accuracy. In Chlamydia caviae (strain ATCC VR-813 / DSM 19441 / 03DC25 / GPIC) (Chlamydophila caviae), this protein is Small ribosomal subunit protein uS4.